The following is a 502-amino-acid chain: ATP synthase subunit alpha (502 aa).

ATP is bound at residue 169-176 (GDRQTGKT).

This sequence belongs to the ATPase alpha/beta chains family. In terms of assembly, F-type ATPases have 2 components, CF(1) - the catalytic core - and CF(0) - the membrane proton channel. CF(1) has five subunits: alpha(3), beta(3), gamma(1), delta(1), epsilon(1). CF(0) has three main subunits: a(1), b(2) and c(9-12). The alpha and beta chains form an alternating ring which encloses part of the gamma chain. CF(1) is attached to CF(0) by a central stalk formed by the gamma and epsilon chains, while a peripheral stalk is formed by the delta and b chains.

Its subcellular location is the cell membrane. It carries out the reaction ATP + H2O + 4 H(+)(in) = ADP + phosphate + 5 H(+)(out). Its function is as follows. Produces ATP from ADP in the presence of a proton gradient across the membrane. The alpha chain is a regulatory subunit. The sequence is that of ATP synthase subunit alpha from Bacillus sp. (strain PS3).